A 527-amino-acid chain; its full sequence is UvrABC system protein C (527 aa).

Residues 9 to 87 enclose the GIY-YIG domain; that stretch reads KNPGCYIYKN…IKKYSPKYNI (79 aa). Residues 191 to 226 enclose the UVR domain; sequence DSLIHELKNEMNEKSKNLQFEEALLIREEINAIERL.

This sequence belongs to the UvrC family. As to quaternary structure, interacts with UvrB in an incision complex.

It is found in the cytoplasm. Functionally, the UvrABC repair system catalyzes the recognition and processing of DNA lesions. UvrC both incises the 5' and 3' sides of the lesion. The N-terminal half is responsible for the 3' incision and the C-terminal half is responsible for the 5' incision. This is UvrABC system protein C from Methanococcus maripaludis (strain DSM 14266 / JCM 13030 / NBRC 101832 / S2 / LL).